Here is a 247-residue protein sequence, read N- to C-terminus: Fibroblast growth factor 14 (247 aa).

Disordered regions lie at residues 1–38 (MAAA…KNRG) and 216–247 (ETVP…CKTT). The span at 15 to 25 (QAREQHWDRPS) shows a compositional bias: basic and acidic residues.

It belongs to the heparin-binding growth factors family. In terms of assembly, interacts with SCN8A.

Its subcellular location is the nucleus. In terms of biological role, probably involved in nervous system development and function. The protein is Fibroblast growth factor 14 (Fgf14) of Rattus norvegicus (Rat).